Consider the following 382-residue polypeptide: Sphingoid long-chain base transporter RSB1 (382 aa).

Residues 1 to 34 (MSNATNNTLGSLLPQLEAAANSNSLYGGMVPNLR) lie on the Extracellular side of the membrane. N3 and N6 each carry an N-linked (GlcNAc...) asparagine glycan. The chain crosses the membrane as a helical span at residues 35–55 (FNITMIVIWGILLTIHVVQLL). Residues 56–57 (MR) lie on the Cytoplasmic side of the membrane. Residues 58–78 (QYWFSIAFICTGILEVLGFIG) form a helical membrane-spanning segment. Residues 79-90 (RTWSHSNVADMD) lie on the Extracellular side of the membrane. The helical transmembrane segment at 91-111 (AFLLNMICLTIAPVFTMGGIY) threads the bilayer. The Cytoplasmic segment spans residues 112–135 (YQLAKLIEVYGHRFSLLPSPMAYS). The chain crosses the membrane as a helical span at residues 136–156 (FIFICSDIVSLVVQAVGGGLC). The Extracellular portion of the chain corresponds to 157 to 171 (GVAVTDGTSTTTGNH). Residues 172–192 (VFIAGLAIQVASMAIFLMLWF) traverse the membrane as a helical segment. Over 193 to 241 (HFLFRIYISVRWEHINSRPISLSLLKISQTEVDYLYREKFHFLRLEPKR) the chain is Cytoplasmic. The chain crosses the membrane as a helical span at residues 242 to 262 (WVFHYFNLAMTVAVLTIFTRC). Residues 263 to 281 (CYRLAELVVGWDGYLITHE) lie on the Extracellular side of the membrane. A helical transmembrane segment spans residues 282–302 (WYFIILDALMMAIATVTLTIF). At 303-382 (HPGFAFKGRS…LFSSKKKAKL (80 aa)) the chain is on the cytoplasmic side.

This sequence belongs to the lipid-translocating exporter (LTE) (TC 9.A.26.1) family.

It localises to the cell membrane. In terms of biological role, catalyzes the ATP-dependent translocation of sphingoid long-chain bases (LCBs) from the cytoplasmic site toward the extracytoplasmic side of the membrane (flip-flop). Involved in the establishment of the functional lipid asymmetry of the plasma membrane. Regulates intracellular levels of LCBs, sphingolipid precursors that are growth inhibitory at increased levels. In Saccharomyces cerevisiae (strain AWRI1631) (Baker's yeast), this protein is Sphingoid long-chain base transporter RSB1 (RSB1).